The primary structure comprises 402 residues: S-adenosylmethionine synthase (402 aa).

ATP is bound at residue 137-142; sequence GQGSAD.

Belongs to the AdoMet synthase 2 family. Requires Mg(2+) as cofactor.

The catalysed reaction is L-methionine + ATP + H2O = S-adenosyl-L-methionine + phosphate + diphosphate. It functions in the pathway amino-acid biosynthesis; S-adenosyl-L-methionine biosynthesis; S-adenosyl-L-methionine from L-methionine: step 1/1. Catalyzes the formation of S-adenosylmethionine from methionine and ATP. The chain is S-adenosylmethionine synthase from Pyrobaculum islandicum (strain DSM 4184 / JCM 9189 / GEO3).